Consider the following 454-residue polypeptide: MLLAQRRLFSLGCRAKPIKTIYSSKVLGLSTSAKMALRFKNAKRIEGLDQNVWVEFTKLAADPSVVNLGQGFPDITLPSYVQEELSKAAFIDNLNQYTRGFGHPSLVKALSCLYGKIYQKQIDPNEEILVTVGGYGSLFNAIQGLVDPGDEVIIMVPFYDCYEPMVKMAGAVPVFIPLRSKRTDGMKWTSSDWTFNPQELESKFSSKTKAIILNTPHNPIGKVYTREELQVIADLCIKHDTLCISDEVYEWLVYTGHKHIKVASLPGMWDRTLTIGSAGKTFSVTGWKLGWSIGPGHLIKHLRTVQQTSVYTCATPLQAALAEAFWIDIKRMDDPECYFNSLPKELEVKRDRMACLLNSVGLKPIIPDGGYFIIADVSSLGVDLSDVKSDEPYDYKFVKWMTKNKKLSAIPVSAFCDSESKPHFEKLVRFCFIKKDSTLDAAEEIFRTWNSRKS.

Gly71 contacts substrate. The residue at position 116 (Lys116) is an N6-acetyllysine; alternate. Lys116 carries the post-translational modification N6-succinyllysine; alternate. Asn218 contributes to the substrate binding site. Residue Lys280 is modified to N6-(pyridoxal phosphate)lysine. Residue Arg429 participates in substrate binding.

It belongs to the class-I pyridoxal-phosphate-dependent aminotransferase family. As to quaternary structure, homodimer. Pyridoxal 5'-phosphate serves as cofactor.

It carries out the reaction L-kynurenine + 2-oxoglutarate = kynurenate + L-glutamate + H2O. The catalysed reaction is L-kynurenine + glyoxylate = kynurenate + glycine + H2O. It catalyses the reaction 3-hydroxy-L-kynurenine + glyoxylate = xanthurenate + glycine + H2O. The enzyme catalyses an S-substituted L-cysteine + H2O = a thiol + pyruvate + NH4(+). Its pathway is amino-acid degradation; L-kynurenine degradation; kynurenate from L-kynurenine: step 1/2. Its function is as follows. Catalyzes the irreversible transamination of the L-tryptophan metabolite L-kynurenine to form kynurenic acid (KA), an intermediate in the tryptophan catabolic pathway which is also a broad spectrum antagonist of the three ionotropic excitatory amino acid receptors among others. May catalyze the beta-elimination of S-conjugates and Se-conjugates of L-(seleno)cysteine, resulting in the cleavage of the C-S or C-Se bond. Has transaminase activity towards L-kynurenine, tryptophan, phenylalanine, serine, cysteine, methionine, histidine, glutamine and asparagine with glyoxylate as an amino group acceptor (in vitro). Has lower activity with 2-oxoglutarate as amino group acceptor (in vitro). This Rattus norvegicus (Rat) protein is Kynurenine--oxoglutarate transaminase 3.